The primary structure comprises 238 residues: MRPADRQADQVRPITITRHYTKHAEGSVLVEFGDTKVLCNATVEEGVPRFLKGQGQGWVTAEYGMLPRATNSRNAREAARGKQTGRTMEIQRLIARSLRAAVDLKALGEFTITVDCDVIQADGGTRTASISGACVALVDALNKMVTEGKLKKSPLKSMVAAVSVGIVDGQPLCDLEYVEDSAAETDMNVVMIDDGRMIEVQGTAEGAPFSHEELLALLALAKGGLEKIFEAQKEALKQ.

Residues R86 and 124–126 (GTR) contribute to the phosphate site.

The protein belongs to the RNase PH family. In terms of assembly, homohexameric ring arranged as a trimer of dimers.

The enzyme catalyses tRNA(n+1) + phosphate = tRNA(n) + a ribonucleoside 5'-diphosphate. Its function is as follows. Phosphorolytic 3'-5' exoribonuclease that plays an important role in tRNA 3'-end maturation. Removes nucleotide residues following the 3'-CCA terminus of tRNAs; can also add nucleotides to the ends of RNA molecules by using nucleoside diphosphates as substrates, but this may not be physiologically important. Probably plays a role in initiation of 16S rRNA degradation (leading to ribosome degradation) during starvation. This Proteus mirabilis (strain HI4320) protein is Ribonuclease PH.